A 237-amino-acid chain; its full sequence is Ribosomal RNA small subunit methyltransferase G (237 aa).

S-adenosyl-L-methionine contacts are provided by residues Gly78, Phe83, 129–130 (AE), and Arg148. Residues 218–237 (KKETPNKFPRKAGMPNKRPL) form a disordered region.

Belongs to the methyltransferase superfamily. RNA methyltransferase RsmG family.

It is found in the cytoplasm. Functionally, specifically methylates the N7 position of a guanine in 16S rRNA. This is Ribosomal RNA small subunit methyltransferase G from Streptococcus suis (strain 98HAH33).